The sequence spans 256 residues: MVALRLIPCLDVANGRVVKGVNFVNLRDSGDPVELACRYSDEGADELVFLDIRASVENRNTLVNLVSRTAKSVKIPFTVGGGIDSVSSINDLLRAGADKVSLNSSAVINPDLISESSREFGNQCIVIAIDARRKVDKVGEWEVYVKGGRENTGIDVLSWAKKVEELGAGEILLTSMDGDGTQNGYDLHLTESVANIVDIPVIASGGAGSLEDIYDVFKEGRASAALLASLLHDKKLTLKEIKTFLLEKKLPIRPYE.

Active-site residues include D11 and D130.

The protein belongs to the HisA/HisF family. As to quaternary structure, heterodimer of HisH and HisF.

It is found in the cytoplasm. The enzyme catalyses 5-[(5-phospho-1-deoxy-D-ribulos-1-ylimino)methylamino]-1-(5-phospho-beta-D-ribosyl)imidazole-4-carboxamide + L-glutamine = D-erythro-1-(imidazol-4-yl)glycerol 3-phosphate + 5-amino-1-(5-phospho-beta-D-ribosyl)imidazole-4-carboxamide + L-glutamate + H(+). The protein operates within amino-acid biosynthesis; L-histidine biosynthesis; L-histidine from 5-phospho-alpha-D-ribose 1-diphosphate: step 5/9. IGPS catalyzes the conversion of PRFAR and glutamine to IGP, AICAR and glutamate. The HisF subunit catalyzes the cyclization activity that produces IGP and AICAR from PRFAR using the ammonia provided by the HisH subunit. In Prochlorococcus marinus (strain MIT 9215), this protein is Imidazole glycerol phosphate synthase subunit HisF.